A 415-amino-acid chain; its full sequence is Serine hydroxymethyltransferase (415 aa).

(6S)-5,6,7,8-tetrahydrofolate contacts are provided by residues Leu-117 and 121 to 123; that span reads GHL. Lys-226 carries the N6-(pyridoxal phosphate)lysine modification. (6S)-5,6,7,8-tetrahydrofolate-binding positions include Glu-241 and 349–351; that span reads SPF.

It belongs to the SHMT family. As to quaternary structure, homodimer. Pyridoxal 5'-phosphate is required as a cofactor.

The protein resides in the cytoplasm. It catalyses the reaction (6R)-5,10-methylene-5,6,7,8-tetrahydrofolate + glycine + H2O = (6S)-5,6,7,8-tetrahydrofolate + L-serine. It functions in the pathway one-carbon metabolism; tetrahydrofolate interconversion. It participates in amino-acid biosynthesis; glycine biosynthesis; glycine from L-serine: step 1/1. Catalyzes the reversible interconversion of serine and glycine with tetrahydrofolate (THF) serving as the one-carbon carrier. This reaction serves as the major source of one-carbon groups required for the biosynthesis of purines, thymidylate, methionine, and other important biomolecules. Also exhibits THF-independent aldolase activity toward beta-hydroxyamino acids, producing glycine and aldehydes, via a retro-aldol mechanism. This Geobacter sulfurreducens (strain ATCC 51573 / DSM 12127 / PCA) protein is Serine hydroxymethyltransferase.